Reading from the N-terminus, the 274-residue chain is Nitrogenase iron protein (274 aa).

8-15 (GKGGIGKS) serves as a coordination point for ATP. C94 contributes to the [4Fe-4S] cluster binding site. R97 carries the ADP-ribosylarginine; by dinitrogenase reductase ADP-ribosyltransferase modification. C131 provides a ligand contact to [4Fe-4S] cluster.

It belongs to the NifH/BchL/ChlL family. In terms of assembly, homodimer. It depends on [4Fe-4S] cluster as a cofactor. Post-translationally, the reversible ADP-ribosylation of Arg-97 inactivates the nitrogenase reductase and regulates nitrogenase activity.

The enzyme catalyses N2 + 8 reduced [2Fe-2S]-[ferredoxin] + 16 ATP + 16 H2O = H2 + 8 oxidized [2Fe-2S]-[ferredoxin] + 2 NH4(+) + 16 ADP + 16 phosphate + 6 H(+). The key enzymatic reactions in nitrogen fixation are catalyzed by the nitrogenase complex, which has 2 components: the iron protein and the molybdenum-iron protein. The sequence is that of Nitrogenase iron protein from Chlorobaculum parvum (strain DSM 263 / NCIMB 8327) (Chlorobium vibrioforme subsp. thiosulfatophilum).